The following is a 35-amino-acid chain: Bacteriocin lactococcin-G subunit beta (35 aa).

As to quaternary structure, bacteriocin activity requires interaction of alpha and beta peptides in a molar ratio of 7:1 or 8:1 respectively.

In terms of biological role, kills Lactococci. The sequence is that of Bacteriocin lactococcin-G subunit beta from Lactococcus lactis subsp. lactis (Streptococcus lactis).